A 235-amino-acid polypeptide reads, in one-letter code: Purine nucleoside phosphorylase DeoD-type (235 aa).

Residue H4 participates in a purine D-ribonucleoside binding. Phosphate contacts are provided by residues G20, R24, R43, and 87–90 (RVGT). Residues E162, 179 to 181 (EME), and 203 to 204 (SD) each bind a purine D-ribonucleoside. D204 (proton donor) is an active-site residue.

Belongs to the PNP/UDP phosphorylase family. In terms of assembly, homohexamer; trimer of homodimers.

It catalyses the reaction a purine D-ribonucleoside + phosphate = a purine nucleobase + alpha-D-ribose 1-phosphate. The catalysed reaction is a purine 2'-deoxy-D-ribonucleoside + phosphate = a purine nucleobase + 2-deoxy-alpha-D-ribose 1-phosphate. In terms of biological role, catalyzes the reversible phosphorolytic breakdown of the N-glycosidic bond in the beta-(deoxy)ribonucleoside molecules, with the formation of the corresponding free purine bases and pentose-1-phosphate. In Bacillus anthracis (strain CDC 684 / NRRL 3495), this protein is Purine nucleoside phosphorylase DeoD-type.